Here is a 101-residue protein sequence, read N- to C-terminus: Large ribosomal subunit protein uL23 (101 aa).

It belongs to the universal ribosomal protein uL23 family. As to quaternary structure, part of the 50S ribosomal subunit. Contacts protein L29, and trigger factor when it is bound to the ribosome.

Its function is as follows. One of the early assembly proteins it binds 23S rRNA. One of the proteins that surrounds the polypeptide exit tunnel on the outside of the ribosome. Forms the main docking site for trigger factor binding to the ribosome. The chain is Large ribosomal subunit protein uL23 from Tolumonas auensis (strain DSM 9187 / NBRC 110442 / TA 4).